The primary structure comprises 311 residues: 3'(2'),5'-bisphosphate nucleotidase 1 (311 aa).

The active-site Proton acceptor is the D49. Mg(2+) is bound by residues E72, D116, L118, and D119. The Proton acceptor role is filled by T121. AMP is bound by residues T202, H205, G227, and K231. D254 serves as a coordination point for Mg(2+).

The protein belongs to the inositol monophosphatase superfamily. The cofactor is Mg(2+).

It carries out the reaction adenosine 3',5'-bisphosphate + H2O = AMP + phosphate. It catalyses the reaction adenosine 2',5'-bisphosphate + H2O = AMP + phosphate. The catalysed reaction is 3'-phosphoadenylyl sulfate + H2O = adenosine 5'-phosphosulfate + phosphate. The enzyme catalyses 1D-myo-inositol 1,4-bisphosphate + H2O = 1D-myo-inositol 4-phosphate + phosphate. It carries out the reaction 1D-myo-inositol 1,3,4-trisphosphate + H2O = 1D-myo-inositol 3,4-bisphosphate + phosphate. With respect to regulation, inhibited by Li(+) and Ca(2+), but not by Na(+). In terms of biological role, phosphatase that converts 3'(2')-phosphoadenosine 5'-phosphate (PAP) to AMP and adenosine 3'-phosphate 5'-phosphosulfate (PAPS) to adenosine 5'-phosphosulfate (APS). Is also able to hydrolyze inositol 1,4-bisphosphate (Ins(1,4)P2) and inositol 1,3,4-trisphosphate (Ins(1,3,4)P3), but is not active on AMP, 3'-AMP, fructose-1,6-bisphosphate, Ins(1)P, Ins(2)P and Ins(1,4,5)P3. Probably prevents the toxic accumulation of PAP, a compound which inhibits a variety of proteins, including PAPS-utilizing enzymes such as sulfotransferases, and RNA processing enzymes. Could also play a role in inositol recycling and phosphoinositide metabolism. The chain is 3'(2'),5'-bisphosphate nucleotidase 1 (bpnt1) from Dictyostelium discoideum (Social amoeba).